The primary structure comprises 150 residues: Small ribosomal subunit protein eS6 (150 aa).

Belongs to the eukaryotic ribosomal protein eS6 family.

This Caldivirga maquilingensis (strain ATCC 700844 / DSM 13496 / JCM 10307 / IC-167) protein is Small ribosomal subunit protein eS6.